A 367-amino-acid polypeptide reads, in one-letter code: Uroporphyrinogen decarboxylase (367 aa).

Substrate is bound by residues 27–31, D77, Y157, T212, and H333; that span reads RQAGR.

The protein belongs to the uroporphyrinogen decarboxylase family. As to quaternary structure, homodimer.

It localises to the cytoplasm. It carries out the reaction uroporphyrinogen III + 4 H(+) = coproporphyrinogen III + 4 CO2. It participates in porphyrin-containing compound metabolism; protoporphyrin-IX biosynthesis; coproporphyrinogen-III from 5-aminolevulinate: step 4/4. Catalyzes the decarboxylation of four acetate groups of uroporphyrinogen-III to yield coproporphyrinogen-III. The protein is Uroporphyrinogen decarboxylase of Cupriavidus metallidurans (strain ATCC 43123 / DSM 2839 / NBRC 102507 / CH34) (Ralstonia metallidurans).